The following is a 273-amino-acid chain: Formamidopyrimidine-DNA glycosylase (273 aa).

Pro2 serves as the catalytic Schiff-base intermediate with DNA. Glu3 functions as the Proton donor in the catalytic mechanism. The active-site Proton donor; for beta-elimination activity is Lys58. 3 residues coordinate DNA: His91, Arg110, and Arg153. The FPG-type zinc finger occupies 238-272 (KVYGKEGQPCPRCGEDFVKIKISGRGTTYCLHCQK). Arg262 acts as the Proton donor; for delta-elimination activity in catalysis.

The protein belongs to the FPG family. Monomer. Requires Zn(2+) as cofactor.

It catalyses the reaction Hydrolysis of DNA containing ring-opened 7-methylguanine residues, releasing 2,6-diamino-4-hydroxy-5-(N-methyl)formamidopyrimidine.. The enzyme catalyses 2'-deoxyribonucleotide-(2'-deoxyribose 5'-phosphate)-2'-deoxyribonucleotide-DNA = a 3'-end 2'-deoxyribonucleotide-(2,3-dehydro-2,3-deoxyribose 5'-phosphate)-DNA + a 5'-end 5'-phospho-2'-deoxyribonucleoside-DNA + H(+). In terms of biological role, involved in base excision repair of DNA damaged by oxidation or by mutagenic agents. Acts as a DNA glycosylase that recognizes and removes damaged bases. Has a preference for oxidized purines, such as 7,8-dihydro-8-oxoguanine (8-oxoG). Has AP (apurinic/apyrimidinic) lyase activity and introduces nicks in the DNA strand. Cleaves the DNA backbone by beta-delta elimination to generate a single-strand break at the site of the removed base with both 3'- and 5'-phosphates. This is Formamidopyrimidine-DNA glycosylase from Lactobacillus delbrueckii subsp. bulgaricus (strain ATCC 11842 / DSM 20081 / BCRC 10696 / JCM 1002 / NBRC 13953 / NCIMB 11778 / NCTC 12712 / WDCM 00102 / Lb 14).